The sequence spans 183 residues: Ribosome-recycling factor (183 aa).

It belongs to the RRF family.

Its subcellular location is the cytoplasm. Its function is as follows. Responsible for the release of ribosomes from messenger RNA at the termination of protein biosynthesis. May increase the efficiency of translation by recycling ribosomes from one round of translation to another. In Deinococcus radiodurans (strain ATCC 13939 / DSM 20539 / JCM 16871 / CCUG 27074 / LMG 4051 / NBRC 15346 / NCIMB 9279 / VKM B-1422 / R1), this protein is Ribosome-recycling factor.